We begin with the raw amino-acid sequence, 238 residues long: Cadherin-2 (238 aa).

Cadherin domains lie at 1-46, 47-161, and 162-238; these read TKPL…RPEF, LHQV…PPEF, and TAMT…RMFV. Over 1–238 the chain is Extracellular; it reads TKPLDRELIA…IDFETNRMFV (238 aa). Positions 5, 7, 38, 39, 40, 41, and 42 each coordinate Ca(2+). The N-linked (GlcNAc...) asparagine glycan is linked to asparagine 52. Residues aspartate 72, aspartate 74, and asparagine 80 each contribute to the Ca(2+) site. An N-linked (GlcNAc...) asparagine glycan is attached at asparagine 104. Aspartate 132 lines the Ca(2+) pocket. Asparagine 181 carries N-linked (GlcNAc...) asparagine glycosylation.

Homodimer (via extracellular region). Can also form heterodimers with other cadherins (via extracellular region). Dimerization occurs in trans, i.e. with a cadherin chain from another cell. Interacts with CDCP1. Interacts with PCDH8; this complex may also include TAOK2. The interaction with PCDH8 may lead to internalization through TAOK2/p38 MAPK pathway. Identified in a complex containing FGFR4, NCAM1, CDH2, PLCG1, FRS2, SRC, SHC1, GAP43 and CTTN. May interact with OBSCN (via protein kinase domain 2). Post-translationally, cleaved by MMP24. Ectodomain cleavage leads to the generation of a soluble 90 kDa N-terminal soluble fragment and a 45 kDa membrane-bound C-terminal fragment 1 (CTF1), which is further cleaved by gamma-secretase into a 35 kDa. Cleavage in neural stem cells by MMP24 affects CDH2-mediated anchorage of neural stem cells to ependymocytes in the adult subependymal zone, leading to modulate neural stem cell quiescence. In terms of processing, may be phosphorylated by OBSCN.

The protein localises to the cell membrane. It localises to the sarcolemma. The protein resides in the cell junction. It is found in the cell surface. Its subcellular location is the desmosome. The protein localises to the adherens junction. Its function is as follows. Calcium-dependent cell adhesion protein; preferentially mediates homotypic cell-cell adhesion by dimerization with a CDH2 chain from another cell. Cadherins may thus contribute to the sorting of heterogeneous cell types. Acts as a regulator of neural stem cells quiescence by mediating anchorage of neural stem cells to ependymocytes in the adult subependymal zone: upon cleavage by MMP24, CDH2-mediated anchorage is affected, leading to modulate neural stem cell quiescence. Plays a role in cell-to-cell junction formation between pancreatic beta cells and neural crest stem (NCS) cells, promoting the formation of processes by NCS cells. Required for proper neurite branching. Required for pre- and postsynaptic organization. CDH2 may be involved in neuronal recognition mechanism. In hippocampal neurons, may regulate dendritic spine density. In Cricetulus griseus (Chinese hamster), this protein is Cadherin-2 (CDH2).